Consider the following 166-residue polypeptide: Phosphopantetheine adenylyltransferase (166 aa).

Residue Thr9 coordinates substrate. ATP contacts are provided by residues 9–10 and His17; that span reads TF. The substrate site is built by Lys41, Leu73, and Arg87. ATP contacts are provided by residues 88 to 90, Glu98, and 123 to 129; these read GLR and YQFISGT.

It belongs to the bacterial CoaD family. As to quaternary structure, homohexamer. It depends on Mg(2+) as a cofactor.

The protein resides in the cytoplasm. The enzyme catalyses (R)-4'-phosphopantetheine + ATP + H(+) = 3'-dephospho-CoA + diphosphate. The protein operates within cofactor biosynthesis; coenzyme A biosynthesis; CoA from (R)-pantothenate: step 4/5. Reversibly transfers an adenylyl group from ATP to 4'-phosphopantetheine, yielding dephospho-CoA (dPCoA) and pyrophosphate. This is Phosphopantetheine adenylyltransferase from Burkholderia mallei (strain NCTC 10229).